The chain runs to 160 residues: Large ribosomal subunit protein eL21 (160 aa).

The protein belongs to the eukaryotic ribosomal protein eL21 family. As to quaternary structure, component of the large ribosomal subunit. Mature ribosomes consist of a small (40S) and a large (60S) subunit. The 40S subunit contains about 32 different proteins and 1 molecule of RNA (18S). The 60S subunit contains 45 different proteins and 3 molecules of RNA (25S, 5.8S and 5S).

The protein localises to the cytoplasm. Its function is as follows. Component of the ribosome, a large ribonucleoprotein complex responsible for the synthesis of proteins in the cell. The small ribosomal subunit (SSU) binds messenger RNAs (mRNAs) and translates the encoded message by selecting cognate aminoacyl-transfer RNA (tRNA) molecules. The large subunit (LSU) contains the ribosomal catalytic site termed the peptidyl transferase center (PTC), which catalyzes the formation of peptide bonds, thereby polymerizing the amino acids delivered by tRNAs into a polypeptide chain. The nascent polypeptides leave the ribosome through a tunnel in the LSU and interact with protein factors that function in enzymatic processing, targeting, and the membrane insertion of nascent chains at the exit of the ribosomal tunnel. This is Large ribosomal subunit protein eL21 from Candida albicans (strain SC5314 / ATCC MYA-2876) (Yeast).